Consider the following 510-residue polypeptide: Calmodulin-binding receptor-like cytoplasmic kinase 3 (510 aa).

The first 30 residues, 1 to 30 (MGGDDLSFTRLVITALFGLLMLLQIKETSA), serve as a signal peptide directing secretion. The segment covering 166 to 178 (VSSFEMSPSSEKI) has biased composition (polar residues). A disordered region spans residues 166–209 (VSSFEMSPSSEKIPQSPFRAPPSPSRVPQSPSRYAMSPRPSRLG). Residue Thr214 is modified to Phosphothreonine. A Protein kinase domain is found at 225–499 (FADSHQIGEG…MEAVGKQLWA (275 aa)). ATP is bound by residues 231–239 (IGEGGFGVV) and Lys253. A caM-binding region spans residues 240–265 (FKGVLDDGQVVAIKRAKKEHFENLRT). Catalysis depends on Asp350, which acts as the Proton acceptor. The residue at position 354 (Ser354) is a Phosphoserine. Residues Thr386 and Thr391 each carry the phosphothreonine modification. Tyr399 bears the Phosphotyrosine mark.

The protein belongs to the protein kinase superfamily. Ser/Thr protein kinase family. Interacts with calmodulin (CaM) in a Ca(2+)-dependent manner.

The protein resides in the cytoplasm. It carries out the reaction L-seryl-[protein] + ATP = O-phospho-L-seryl-[protein] + ADP + H(+). It catalyses the reaction L-threonyl-[protein] + ATP = O-phospho-L-threonyl-[protein] + ADP + H(+). The sequence is that of Calmodulin-binding receptor-like cytoplasmic kinase 3 (CRCK3) from Arabidopsis thaliana (Mouse-ear cress).